Reading from the N-terminus, the 322-residue chain is Alanine dehydrogenase (322 aa).

The active-site Proton donor/acceptor is K65. NAD(+)-binding positions include R108, 135–136, 157–159, 217–219, K223, and S290; these read TQ, DVR, and GAD.

This sequence belongs to the ornithine cyclodeaminase/mu-crystallin family. Archaeal alanine dehydrogenase subfamily. In terms of assembly, homodimer.

The enzyme catalyses L-alanine + NAD(+) + H2O = pyruvate + NH4(+) + NADH + H(+). Its function is as follows. Catalyzes the NAD(+)-dependent oxidative deamination of L-alanine to pyruvate, and the reverse reaction, the reductive amination of pyruvate. Its physiological role is not known. Cannot use NADP(+) instead of NAD(+) as a cosubstrate. In the deamination direction, can also efficiently use L-2-aminobutyrate as substrate. In the reductive amination direction, also exhibits high activity with 2-oxobutyrate and oxaloacetate as substrate. In contrast to bacterial homologs, does not exhibit any ornithine cyclodeaminase activity. In Archaeoglobus fulgidus (strain ATCC 49558 / DSM 4304 / JCM 9628 / NBRC 100126 / VC-16), this protein is Alanine dehydrogenase.